We begin with the raw amino-acid sequence, 497 residues long: Meiosis-specific serine/threonine-protein kinase MEK1 (497 aa).

The FHA domain maps to 47–102; it reads VKVGRNDKECQLVLTNPSISSVHCVFWCVFFDEDSIPMFYVKDCSLNGTYLNGLLL. Residues 162–444 enclose the Protein kinase domain; the sequence is EITNRIVGNG…SKQGLKHIWI (283 aa). Residues 168–176 and lysine 199 each bind ATP; that span reads VGNGTFGHV. Aspartate 290 (proton acceptor) is an active-site residue.

This sequence belongs to the protein kinase superfamily. CAMK Ser/Thr protein kinase family. CHEK2 subfamily.

It catalyses the reaction L-seryl-[protein] + ATP = O-phospho-L-seryl-[protein] + ADP + H(+). The enzyme catalyses L-threonyl-[protein] + ATP = O-phospho-L-threonyl-[protein] + ADP + H(+). Probable protein kinase required for meiotic recombination. This is Meiosis-specific serine/threonine-protein kinase MEK1 (MEK1) from Saccharomyces cerevisiae (strain ATCC 204508 / S288c) (Baker's yeast).